The sequence spans 348 residues: Phosphatidylglycerophosphate phosphatase 1, chloroplastic/mitochondrial (348 aa).

The N-terminal 58 residues, 1-58, are a transit peptide targeting the chloroplast and mitochondrion; that stretch reads MQTPSMAASTTSYYPIPKSFLLSPPRHKRNPNLISCSTKPICSPPPPSSSSSSPLQTT. Residues 17 to 67 form a disordered region; it reads PKSFLLSPPRHKRNPNLISCSTKPICSPPPPSSSSSSPLQTTTTHRSQKQN. Polar residues predominate over residues 55 to 67; sequence LQTTTTHRSQKQN. The short motif at 184–188 is the Phosphoryl acceptor element; it reads DKDNT.

This sequence belongs to the HAD-like hydrolase superfamily. Requires Mg(2+) as cofactor. Mainly expressed in inflorescences (especially in pollen) and, to a lower extent, in leaves, stems and siliques, as well as, at low levels, in roots. Mostly expressed in hypocotyl, vasculatures, trichomes, guard cells and stigmas.

It localises to the plastid. It is found in the chloroplast. The protein localises to the mitochondrion. The enzyme catalyses a 1,2-diacyl-sn-glycero-3-phospho-(1'-sn-glycero-3'-phosphate) + H2O = a 1,2-diacyl-sn-glycero-3-phospho-(1'-sn-glycerol) + phosphate. The protein operates within phospholipid metabolism; phosphatidylglycerol biosynthesis; phosphatidylglycerol from CDP-diacylglycerol: step 2/2. Phosphatidylglycerophosphate (PGP) phosphatase involved in the biosynthesis of phosphatidylglycerol (PG), a phosphoglycerolipid predominantly present in chloroplastic thylakoid membranes and which has important photosynthetic function; seems to use PGP 34:3, PGP 34:2 and PGP 34:1 as substrates. Required for thylakoid membranes development and chloroplast function. Necessary for normal cell growth. Required for root growth and columella cells organization. This Arabidopsis thaliana (Mouse-ear cress) protein is Phosphatidylglycerophosphate phosphatase 1, chloroplastic/mitochondrial.